Here is a 360-residue protein sequence, read N- to C-terminus: Phenylalanine--tRNA ligase alpha subunit (360 aa).

Residue Glu-260 participates in Mg(2+) binding.

The protein belongs to the class-II aminoacyl-tRNA synthetase family. Phe-tRNA synthetase alpha subunit type 1 subfamily. Tetramer of two alpha and two beta subunits. Requires Mg(2+) as cofactor.

The protein resides in the cytoplasm. It catalyses the reaction tRNA(Phe) + L-phenylalanine + ATP = L-phenylalanyl-tRNA(Phe) + AMP + diphosphate + H(+). The protein is Phenylalanine--tRNA ligase alpha subunit of Paracoccus denitrificans (strain Pd 1222).